The sequence spans 625 residues: Putative surface protein bspA-like (625 aa).

Residues 1–548 lie on the Extracellular side of the membrane; the sequence is MMTPGKSSKT…KAIKGGEIAG (548 aa). An N-linked (GlcNAc...) asparagine glycan is attached at Asn-15. LRR repeat units lie at residues 38-60, 61-83, 85-106, 107-129, 153-175, 176-198, 200-221, 222-245, 247-267, 271-293, 325-347, 348-368, and 369-392; these read CSSF…AFTG, CSSL…AFSE, SSIT…AFSG, CSKL…AFRG, CSSL…AFYG, CSSL…AFQE, SKLT…AFKR, CSSL…FYEC, KLTS…AFSK, LTSI…VFLN, IPKS…TLTH, FTNL…PESF, and IEGD…AFKD. An N-linked (GlcNAc...) asparagine glycan is attached at Asn-227. The tract at residues 439-538 is disordered; that stretch reads KQSEENPNQP…TDDPSKSKEN (100 aa). A compositionally biased stretch (low complexity) spans 443 to 526; that stretch reads ENPNQPGENP…QPGENPSQPG (84 aa). Residues 549-571 traverse the membrane as a helical segment; the sequence is IIIGSLIGICLVVAICFGVYYYF. Topologically, residues 572 to 625 are cytoplasmic; it reads MRIKPKNKNDDNEGNQEDTIANGTNEVTNENVLATFDEQPNNESDSNGLDSAEV. The interval 577-625 is disordered; sequence KNKNDDNEGNQEDTIANGTNEVTNENVLATFDEQPNNESDSNGLDSAEV. Residues 588–625 show a composition bias toward polar residues; sequence EDTIANGTNEVTNENVLATFDEQPNNESDSNGLDSAEV.

The protein localises to the cell membrane. May bind host tissue. In Trichomonas vaginalis, this protein is Putative surface protein bspA-like (BSPAL1).